We begin with the raw amino-acid sequence, 276 residues long: Shikimate dehydrogenase (NADP(+)) (276 aa).

Residues 20–22 and Thr-67 contribute to the shikimate site; that span reads SRS. Lys-71 (proton acceptor) is an active-site residue. Asp-83 is a binding site for NADP(+). Residues Asn-92 and Asp-107 each contribute to the shikimate site. Residues 131–135 and Ile-217 contribute to the NADP(+) site; that span reads GAGGA. A shikimate-binding site is contributed by Tyr-219. NADP(+) is bound at residue Gly-240.

This sequence belongs to the shikimate dehydrogenase family. As to quaternary structure, homodimer.

It carries out the reaction shikimate + NADP(+) = 3-dehydroshikimate + NADPH + H(+). It participates in metabolic intermediate biosynthesis; chorismate biosynthesis; chorismate from D-erythrose 4-phosphate and phosphoenolpyruvate: step 4/7. Involved in the biosynthesis of the chorismate, which leads to the biosynthesis of aromatic amino acids. Catalyzes the reversible NADPH linked reduction of 3-dehydroshikimate (DHSA) to yield shikimate (SA). This is Shikimate dehydrogenase (NADP(+)) from Acidiphilium cryptum (strain JF-5).